Here is a 338-residue protein sequence, read N- to C-terminus: 1-aminocyclopropane-1-carboxylate deaminase (338 aa).

K51 is subject to N6-(pyridoxal phosphate)lysine. S78 acts as the Nucleophile in catalysis.

It belongs to the ACC deaminase/D-cysteine desulfhydrase family. As to quaternary structure, homotrimer. Pyridoxal 5'-phosphate is required as a cofactor.

The enzyme catalyses 1-aminocyclopropane-1-carboxylate + H2O = 2-oxobutanoate + NH4(+). Its function is as follows. Catalyzes a cyclopropane ring-opening reaction, the irreversible conversion of 1-aminocyclopropane-1-carboxylate (ACC) to ammonia and alpha-ketobutyrate. Allows growth on ACC as a nitrogen source. The sequence is that of 1-aminocyclopropane-1-carboxylate deaminase from Ralstonia nicotianae (strain ATCC BAA-1114 / GMI1000) (Ralstonia solanacearum).